The following is a 166-amino-acid chain: Phosphopantetheine adenylyltransferase (166 aa).

Serine 10 is a substrate binding site. Residues 10–11 (SF) and histidine 18 each bind ATP. Substrate contacts are provided by lysine 42, alanine 79, and arginine 93. Residues 94–96 (GLR), glutamate 104, and 129–135 (VRPITAT) each bind ATP.

It belongs to the bacterial CoaD family. As to quaternary structure, homohexamer. Mg(2+) is required as a cofactor.

It localises to the cytoplasm. The catalysed reaction is (R)-4'-phosphopantetheine + ATP + H(+) = 3'-dephospho-CoA + diphosphate. It functions in the pathway cofactor biosynthesis; coenzyme A biosynthesis; CoA from (R)-pantothenate: step 4/5. Its function is as follows. Reversibly transfers an adenylyl group from ATP to 4'-phosphopantetheine, yielding dephospho-CoA (dPCoA) and pyrophosphate. This chain is Phosphopantetheine adenylyltransferase, found in Methylobacterium sp. (strain 4-46).